The following is a 270-amino-acid chain: MPELPEVETTRRGIAPYLEGQRVSRVIVRERRLRWPIPEDLDVRLSGQRIECVERRAKYLLIKAEAGSLIGHLGMSGSLRLVECGLVAAKHEHVDIELESGLALRYTDPRRFGALLWCEDPLRHELLARLGPEPLGGLFDGERLFQLSRGRSMAVKPFIMDNAVVVGVGNIYATEALFAAGIDPRREAGSISRARYLRLAEEIKRILAHAIERGGTTLRDFVGGDGQPGYFQQELFAYGRAGEFCKVCGTTLREVKLGQRASVYCPRCQR.

P2 functions as the Schiff-base intermediate with DNA in the catalytic mechanism. Catalysis depends on E3, which acts as the Proton donor. K58 serves as the catalytic Proton donor; for beta-elimination activity. Residues H91, R110, and R151 each coordinate DNA. The FPG-type zinc finger occupies 236–270; it reads FAYGRAGEFCKVCGTTLREVKLGQRASVYCPRCQR. R260 acts as the Proton donor; for delta-elimination activity in catalysis.

The protein belongs to the FPG family. Monomer. Zn(2+) is required as a cofactor.

It carries out the reaction Hydrolysis of DNA containing ring-opened 7-methylguanine residues, releasing 2,6-diamino-4-hydroxy-5-(N-methyl)formamidopyrimidine.. The enzyme catalyses 2'-deoxyribonucleotide-(2'-deoxyribose 5'-phosphate)-2'-deoxyribonucleotide-DNA = a 3'-end 2'-deoxyribonucleotide-(2,3-dehydro-2,3-deoxyribose 5'-phosphate)-DNA + a 5'-end 5'-phospho-2'-deoxyribonucleoside-DNA + H(+). Functionally, involved in base excision repair of DNA damaged by oxidation or by mutagenic agents. Acts as a DNA glycosylase that recognizes and removes damaged bases. Has a preference for oxidized purines, such as 7,8-dihydro-8-oxoguanine (8-oxoG). Has AP (apurinic/apyrimidinic) lyase activity and introduces nicks in the DNA strand. Cleaves the DNA backbone by beta-delta elimination to generate a single-strand break at the site of the removed base with both 3'- and 5'-phosphates. The sequence is that of Formamidopyrimidine-DNA glycosylase from Ectopseudomonas mendocina (strain ymp) (Pseudomonas mendocina).